Consider the following 173-residue polypeptide: Cytochrome c homolog (173 aa).

Residues methionine 1 to lysine 8 lie on the Cytoplasmic side of the membrane. A helical; Signal-anchor transmembrane segment spans residues isoleucine 9–isoleucine 29. Topologically, residues leucine 30 to lysine 173 are periplasmic. Heme c-binding residues include cysteine 82, cysteine 85, histidine 86, and methionine 148.

The protein belongs to the cytochrome c family. Post-translationally, binds 1 heme c group covalently per subunit.

It is found in the cell membrane. Functionally, may be involved in electron transfer from bc1 complex to aa3. The protein is Cytochrome c homolog (cycM) of Rickettsia bellii (strain RML369-C).